A 139-amino-acid polypeptide reads, in one-letter code: D-ribose pyranase (139 aa).

H20 acts as the Proton donor in catalysis. Residues D28, H106, and 128–130 contribute to the substrate site; that span reads YAN.

It belongs to the RbsD / FucU family. RbsD subfamily. Homodecamer.

The protein localises to the cytoplasm. The catalysed reaction is beta-D-ribopyranose = beta-D-ribofuranose. The protein operates within carbohydrate metabolism; D-ribose degradation; D-ribose 5-phosphate from beta-D-ribopyranose: step 1/2. Catalyzes the interconversion of beta-pyran and beta-furan forms of D-ribose. This is D-ribose pyranase from Photobacterium profundum (strain SS9).